A 522-amino-acid polypeptide reads, in one-letter code: Insulinoma-associated protein 1 (522 aa).

A compositionally biased stretch (basic residues) spans 1 to 12 (MPRGFLVKRSKK). The tract at residues 1-20 (MPRGFLVKRSKKSTPVSYRI) is SNAG domain. Disordered stretches follow at residues 1–112 (MPRG…SREH) and 182–235 (AAEA…KPKA). The interval 2-7 (PRGFLV) is required and sufficient for interaction with KDM1A. The interval 43 to 57 (PPAPGPGPVPGPLQP) is necessary for interaction with CCND1. The segment covering 43–61 (PPAPGPGPVPGPLQPPPPT) has biased composition (pro residues). Composition is skewed to low complexity over residues 66–75 (AALAAALACA) and 212–228 (ASAA…AKAP). Residues 277–297 (FICQLCKEEYADPFALAQHKC) form a C2H2-type 1; atypical zinc finger. The C2H2-type 2 zinc finger occupies 305-327 (YRCPECAKVFSCPANLASHRRWH). The interval 325–373 (RWHKPRPAPAAARACEPETPARAEAREATGGGGSDRDTPSPGGVSESGS) is disordered. The segment covering 339–351 (CEPETPARAEARE) has biased composition (basic and acidic residues). 3 C2H2-type zinc fingers span residues 378–400 (YECH…LLAH), 453–476 (HLCP…RLLH), and 481–504 (FPCK…NKCH).

It belongs to the INSM1 family. Interacts (via the N-terminal region) with CCND1 (via cyclin N-terminal domain); the interaction competes with the binding of CCND1 to CDK4 during cell cycle progression and increases its transcriptional repressor activity. Interacts with HDAC3; the interaction increases its transcriptional repressor activity. Interacts (via the SNAG domain) with HDAC1. Interacts (via the SNAG domain) with HDAC2. Interacts (via the SNAG domain) with KDM1A. Interacts (via the SNAG domain) with RCOR1. Interacts with SORBS1.

It localises to the nucleus. Its function is as follows. Sequence-specific DNA-binding transcriptional regulator that plays a key role in neurogenesis and neuroendocrine cell differentiation during embryonic and/or fetal development. Binds to the consensus sequence 5'-[TG][TC][TC][TT][GA]GGG[CG]A-3' in target promoters. Acts as a transcriptional repressor of NEUROD1 and INS expression via its interaction with cyclin CCND1 in a cell cycle-independent manner. Negatively regulates skeletal muscle-specific gene expression in endocrine cells of the pituitary by inhibiting the Notch signaling pathway. Represses target gene transcription by recruiting chromatin-modifying factors, such as HDAC1, HDAC2, HDAC3, KDM1A and RCOR1 histone deacetylases. Binds to its own promoter, suggesting autoregulation as a self-control feedback mechanism. Competes with histone H3 for the same binding site on the histone demethylase complex formed by KDM1A and RCOR1, and thereby inhibits demethylation of histone H3 at 'Lys-4'. Promotes the generation and expansion of neuronal basal progenitor cells in the developing neocortex. Involved in the differentiation of endocrine cells of the developing anterior pituitary gland, of the pancreas and intestine, and of sympatho-adrenal cells in the peripheral nervous system. Promotes cell cycle signaling arrest and inhibition of cellular proliferation. This is Insulinoma-associated protein 1 (INSM1) from Bos taurus (Bovine).